The chain runs to 536 residues: Probable monofunctional riboflavin biosynthesis protein RIBA 3, chloroplastic (536 aa).

Residues 1-43 constitute a chloroplast transit peptide; sequence MDRVLLSSQLSSQTVVNTRVQQGSGGINSIGFAVIRKGSLKLR. The tract at residues 44-310 is inactive DHBP synthase; the sequence is CYAIGGLGGG…IADLIRYRRK (267 aa). D-ribulose 5-phosphate contacts are provided by residues 133 to 134, aspartate 138, and 248 to 252; these read GD and RAGHT. The tract at residues 311 to 536 is GTP cyclohydrolase II; it reads REKLVELIAV…GDQDEDDTHN (226 aa). Residue 361 to 365 participates in GTP binding; that stretch reads RVHSE. Cysteine 366, cysteine 377, and cysteine 379 together coordinate Zn(2+). GTP is bound by residues glutamine 382, 405-407, and threonine 427; that span reads EGR. Residue aspartate 439 is the Proton acceptor; for GTP cyclohydrolase activity of the active site. The active-site Nucleophile; for GTP cyclohydrolase activity is arginine 441. Residues threonine 462 and lysine 467 each coordinate GTP. The disordered stretch occupies residues 507-536; it reads YGSDLPGNVPEEFLNPDDIAGDQDEDDTHN. The segment covering 525–536 has biased composition (acidic residues); it reads IAGDQDEDDTHN.

It in the N-terminal section; belongs to the DHBP synthase family. This sequence in the C-terminal section; belongs to the GTP cyclohydrolase II family. The cofactor is Zn(2+).

Its subcellular location is the plastid. The protein resides in the chloroplast. The catalysed reaction is GTP + 4 H2O = 2,5-diamino-6-hydroxy-4-(5-phosphoribosylamino)-pyrimidine + formate + 2 phosphate + 3 H(+). It participates in cofactor biosynthesis; riboflavin biosynthesis; 5-amino-6-(D-ribitylamino)uracil from GTP: step 1/4. In terms of biological role, involved in riboflavin biosynthesis. Catalyzes the conversion of GTP to 2,5-diamino-6-ribosylamino-4(3H)-pyrimidinone 5'-phosphate (DARP), formate and pyrophosphate. The polypeptide is Probable monofunctional riboflavin biosynthesis protein RIBA 3, chloroplastic (RIBA3) (Oryza sativa subsp. japonica (Rice)).